Consider the following 732-residue polypeptide: Lanosterol synthase (732 aa).

Residue Thr2 is modified to N-acetylthreonine. PFTB repeat units lie at residues 77–121 (ALNG…PLPA), 124–165 (REEI…RILG), 424–468 (PDNP…LLLQ), 483–528 (LCDA…MIDY), 560–600 (LTQG…ACMG), 612–653 (VSRA…HNTC), and 670–712 (QERG…NIFP). The active-site Proton donor is the Asp455.

The protein belongs to the terpene cyclase/mutase family. As to quaternary structure, monomer. Widely expressed. Expressed in the hair bulb, the outer root sheath and hair matrix of the hair follicle epithelium. Also detected in dermal papilla, epidermis, sweat glands, sebaceous glands, and blood vessels.

It is found in the endoplasmic reticulum membrane. The enzyme catalyses (S)-2,3-epoxysqualene = lanosterol. It functions in the pathway terpene metabolism; lanosterol biosynthesis; lanosterol from farnesyl diphosphate: step 3/3. Functionally, key enzyme in the cholesterol biosynthesis pathway. Catalyzes the cyclization of (S)-2,3 oxidosqualene to lanosterol, a reaction that forms the sterol nucleus. Through the production of lanosterol may regulate lens protein aggregation and increase transparency. The sequence is that of Lanosterol synthase (LSS) from Homo sapiens (Human).